A 701-amino-acid chain; its full sequence is Triadin (701 aa).

A disordered region spans residues 1 to 28 (MTEITAEGNASTTTTVIDSKNGSVPKSP). Residues 1-47 (MTEITAEGNASTTTTVIDSKNGSVPKSPGKVLKRTVTEDIVTTFSSP) are Cytoplasmic-facing. The span at 8 to 24 (GNASTTTTVIDSKNGSV) shows a compositional bias: polar residues. The helical transmembrane segment at 48 to 68 (AAWLLVIALIITWSAVAVVMF) threads the bilayer. Residues 69–701 (DLVDYKNFSA…SSPGQKQQGQ (633 aa)) lie on the Lumenal side of the membrane. Asparagine 75 carries N-linked (GlcNAc...) asparagine glycosylation. Positions 117–130 (DGDEDDDDGDEDTD) are enriched in acidic residues. 3 disordered regions span residues 117-256 (DGDE…KHEQ), 273-654 (GDLR…TKRQ), and 676-701 (FPVT…QQGQ). Basic and acidic residues-rich tracts occupy residues 131 to 256 (KGEI…KHEQ), 303 to 351 (EGKE…KAPE), 365 to 385 (AKKD…EEHP), 391 to 426 (EKKE…KEET), 437 to 485 (GKKE…EVKP), and 492 to 643 (VKKE…KAKE). N-linked (GlcNAc...) asparagine glycosylation occurs at asparagine 617. The span at 684–701 (PGESSGQPSSPGQKQQGQ) shows a compositional bias: low complexity.

In terms of assembly, homooligomer of variable subunit number; disulfide-linked. Interacts with CASQ1 and RYR1 in skeletal muscle. Interacts with CASQ2. Phosphorylated by CaMK2. In terms of processing, N-glycosylated. Detected in heart (at protein level). Skeletal and cardiac muscle.

Its subcellular location is the sarcoplasmic reticulum membrane. Contributes to the regulation of lumenal Ca2+ release via the sarcoplasmic reticulum calcium release channels RYR1 and RYR2, a key step in triggering skeletal and heart muscle contraction. Required for normal organization of the triad junction, where T-tubules and the sarcoplasmic reticulum terminal cisternae are in close contact. Required for normal skeletal muscle strength. Plays a role in excitation-contraction coupling in the heart and in regulating the rate of heart beats. The polypeptide is Triadin (TRDN) (Canis lupus familiaris (Dog)).